Reading from the N-terminus, the 723-residue chain is ATP-dependent zinc metalloprotease YME1 homolog (723 aa).

The chain crosses the membrane as a helical span at residues 198–220 (LTRFYIFLVFCIFFGYLTGRIRV). 288-295 (GPPGTGKT) contributes to the ATP binding site. A Zn(2+)-binding site is contributed by histidine 509. Residue glutamate 510 is part of the active site. 2 residues coordinate Zn(2+): histidine 513 and aspartate 587.

This sequence in the N-terminal section; belongs to the AAA ATPase family. It in the C-terminal section; belongs to the peptidase M41 family. The cofactor is Zn(2+).

It localises to the mitochondrion inner membrane. The protein resides in the mitochondrion. ATP-dependent metalloprotease that catalyzes the degradation of folded and unfolded proteins with a suitable degron sequence in the mitochondrial intermembrane region. Plays an important role in regulating mitochondrial morphology and function. In Caenorhabditis elegans, this protein is ATP-dependent zinc metalloprotease YME1 homolog (ymel-1).